We begin with the raw amino-acid sequence, 201 residues long: Thioredoxin reductase-like selenoprotein T (201 aa).

A signal peptide spans 1-26; it reads MARSSGPLCLLLLGGLVAGILSGASA. Positions 51–54 form a cross-link, cysteinyl-selenocysteine (Cys-Sec); sequence CVSU. A non-standard amino acid (selenocysteine) is located at residue selenocysteine 54. The chain crosses the membrane as a helical span at residues 96–116; the sequence is VFKLVLIGLIIAGKDPFAFFG.

The protein belongs to the SelWTH family. Selenoprotein T subfamily. May contain a selenide-sulfide bond between Cys-51 and Sec-54. This bond is speculated to serve as redox-active pair.

Its subcellular location is the endoplasmic reticulum membrane. It carries out the reaction [thioredoxin]-dithiol + NADP(+) = [thioredoxin]-disulfide + NADPH + H(+). Functionally, selenoprotein with thioredoxin reductase-like oxidoreductase activity. This is Thioredoxin reductase-like selenoprotein T (selenot) from Xenopus tropicalis (Western clawed frog).